Reading from the N-terminus, the 404-residue chain is Homoserine O-succinyltransferase (404 aa).

Low complexity predominate over residues 1–25 (MTDIQADPAVTAADAAQADTSSPTA). The disordered stretch occupies residues 1–30 (MTDIQADPAVTAADAAQADTSSPTAHQGKP). Positions 75–384 (NAVLICHALN…HGHDAFLLED (310 aa)) constitute an AB hydrolase-1 domain. Residue serine 179 is the Nucleophile of the active site. Substrate is bound at residue arginine 249. Residues aspartate 344 and histidine 377 contribute to the active site. Aspartate 378 contacts substrate.

It belongs to the AB hydrolase superfamily. MetX family. As to quaternary structure, homodimer.

Its subcellular location is the cytoplasm. It catalyses the reaction L-homoserine + succinyl-CoA = O-succinyl-L-homoserine + CoA. The protein operates within amino-acid biosynthesis; L-methionine biosynthesis via de novo pathway; O-succinyl-L-homoserine from L-homoserine: step 1/1. Functionally, transfers a succinyl group from succinyl-CoA to L-homoserine, forming succinyl-L-homoserine. The chain is Homoserine O-succinyltransferase from Ralstonia pickettii (strain 12J).